We begin with the raw amino-acid sequence, 563 residues long: Delta-1-pyrroline-5-carboxylate dehydrogenase, mitochondrial (563 aa).

A mitochondrion-targeting transit peptide spans 1–24 (MLLPAPALRRALLSRPWTGAGLRW). Residue Lys31 is modified to N6-succinyllysine. Ser44 bears the Phosphoserine mark. N6-acetyllysine is present on Lys52. 5 positions are modified to N6-acetyllysine; alternate: Lys93, Lys99, Lys114, Lys130, and Lys175. N6-succinyllysine; alternate occurs at positions 93, 99, 114, 130, and 175. Residues Ser208, Lys233, and 286–290 (GSVPT) contribute to the NAD(+) site. Glu314 functions as the Proton acceptor in the catalytic mechanism. Position 318 is an N6-acetyllysine (Lys318). Lys347 carries the N6-succinyllysine modification. Cys348 serves as the catalytic Nucleophile. Residues Lys365 and Lys376 each carry the N6-acetyllysine modification. Lys395 is subject to N6-succinyllysine. Position 447 (Glu447) interacts with NAD(+). Lys462 is modified (N6-acetyllysine). Lys509 carries the post-translational modification N6-acetyllysine; alternate. Residue Lys509 is modified to N6-succinyllysine; alternate. Ser513 provides a ligand contact to substrate. Lys531 and Lys552 each carry N6-acetyllysine.

It belongs to the aldehyde dehydrogenase family. Homodimer. As to expression, highest expression is found in liver followed by skeletal muscle, kidney, heart, brain, placenta, lung and pancreas.

The protein resides in the mitochondrion matrix. The enzyme catalyses L-glutamate 5-semialdehyde + NAD(+) + H2O = L-glutamate + NADH + 2 H(+). It functions in the pathway amino-acid degradation; L-proline degradation into L-glutamate; L-glutamate from L-proline: step 2/2. In terms of biological role, irreversible conversion of delta-1-pyrroline-5-carboxylate (P5C), derived either from proline or ornithine, to glutamate. This is a necessary step in the pathway interconnecting the urea and tricarboxylic acid cycles. The preferred substrate is glutamic gamma-semialdehyde, other substrates include succinic, glutaric and adipic semialdehydes. This Homo sapiens (Human) protein is Delta-1-pyrroline-5-carboxylate dehydrogenase, mitochondrial (ALDH4A1).